The following is a 205-amino-acid chain: High frequency lysogenization protein HflD homolog (205 aa).

It belongs to the HflD family.

Its subcellular location is the cytoplasm. The protein resides in the cell inner membrane. The polypeptide is High frequency lysogenization protein HflD homolog (Alkalilimnicola ehrlichii (strain ATCC BAA-1101 / DSM 17681 / MLHE-1)).